A 201-amino-acid chain; its full sequence is Peptide deformylase (201 aa).

The tract at residues 1–24 (MANHFSQLAKKSKTNGNSEKIAKE) is disordered. Positions 121 and 163 each coordinate Fe cation. Glu-164 is an active-site residue. Position 167 (His-167) interacts with Fe cation.

It belongs to the polypeptide deformylase family. Fe(2+) serves as cofactor.

It catalyses the reaction N-terminal N-formyl-L-methionyl-[peptide] + H2O = N-terminal L-methionyl-[peptide] + formate. Functionally, removes the formyl group from the N-terminal Met of newly synthesized proteins. Requires at least a dipeptide for an efficient rate of reaction. N-terminal L-methionine is a prerequisite for activity but the enzyme has broad specificity at other positions. This chain is Peptide deformylase, found in Prochlorococcus marinus (strain MIT 9312).